A 303-amino-acid chain; its full sequence is Protoheme IX farnesyltransferase (303 aa).

The next 7 membrane-spanning stretches (helical) occupy residues 25–45, 54–74, 118–138, 151–171, 177–197, 230–250, and 280–300; these read MGLV…AIVL, IPQI…ACAL, LLFA…VGYV, WNTV…WTAI, LVAV…FYAL, LVVL…FIVL, and FIYS…ISLI.

It belongs to the UbiA prenyltransferase family. Protoheme IX farnesyltransferase subfamily. In terms of assembly, interacts with CtaA.

Its subcellular location is the cell membrane. The catalysed reaction is heme b + (2E,6E)-farnesyl diphosphate + H2O = Fe(II)-heme o + diphosphate. Its pathway is porphyrin-containing compound metabolism; heme O biosynthesis; heme O from protoheme: step 1/1. Converts heme B (protoheme IX) to heme O by substitution of the vinyl group on carbon 2 of heme B porphyrin ring with a hydroxyethyl farnesyl side group. The polypeptide is Protoheme IX farnesyltransferase (Staphylococcus saprophyticus subsp. saprophyticus (strain ATCC 15305 / DSM 20229 / NCIMB 8711 / NCTC 7292 / S-41)).